The primary structure comprises 583 residues: Nuclear hormone receptor family member nhr-31 (583 aa).

A disordered region spans residues 43–77 (DLRTSGATSSSGPATSYIIRPSDKQPTVSSGGSQN). The span at 46 to 58 (TSGATSSSGPATS) shows a compositional bias: low complexity. Residues 66 to 77 (KQPTVSSGGSQN) are compositionally biased toward polar residues. The segment at residues 79-154 (DSVCAVCGDG…AGMDPKAVRP (76 aa)) is a DNA-binding region (nuclear receptor). 2 NR C4-type zinc fingers span residues 82-102 (CAVC…CYGC) and 118-142 (CRFS…FQRC). One can recognise an NR LBD domain in the interval 195–464 (ETRILLMQLM…DNLLAEMFGD (270 aa)).

Belongs to the nuclear hormone receptor family.

The protein localises to the nucleus. Functionally, orphan nuclear receptor. In Caenorhabditis elegans, this protein is Nuclear hormone receptor family member nhr-31 (nhr-31).